The primary structure comprises 505 residues: Protein disulfide-isomerase A3 (505 aa).

Positions 1–24 (MRFSCLALLPGVALLLASALLASA) are cleaved as a signal peptide. The Thioredoxin 1 domain maps to 25 to 133 (SDVLELTDEN…IVSHLKKQAG (109 aa)). Residues Cys-57 and Cys-60 each act as nucleophile in the active site. Cys-57 and Cys-60 are joined by a disulfide. Lys-61 bears the N6-methyllysine mark. An intrachain disulfide couples Cys-85 to Cys-92. An N6-succinyllysine modification is found at Lys-129. Lys-152 bears the N6-acetyllysine mark. At Lys-218 the chain carries N6-succinyllysine. Lys-252 is subject to N6-acetyllysine. A Phosphothreonine modification is found at Thr-319. Positions 343 to 485 (SRDGKALERF…FISYLQREAT (143 aa)) constitute a Thioredoxin 2 domain. Lys-362 is modified (N6-acetyllysine). Active-site nucleophile residues include Cys-406 and Cys-409. Cys-406 and Cys-409 are joined by a disulfide. Residues 484 to 505 (ATNPPIIQEEKPKKKKKAQEDL) form a disordered region. Basic and acidic residues predominate over residues 491–505 (QEEKPKKKKKAQEDL). N6-acetyllysine is present on Lys-494. The Prevents secretion from ER signature appears at 502 to 505 (QEDL).

The protein belongs to the protein disulfide isomerase family. In terms of assembly, part of the major histocompatibility complex class I (MHC I) peptide loading complex composed of TAP1, TAP2, B2M, MHC heavy chain, TAPBP, PDIA3, and CALR. Interacts with ERP27 and CANX. Interacts with SERPINA2 and with SERPINA1. Interacts with ATP2A2. Post-translationally, within the major histocompatibility complex class I (MHC I) peptide loading complex forms reversible disulfide-linked heterodimers with TAPBP as part of its protein folding chaperone activity. This is essential to assist the dynamic assembly of the MHC I complex with high affinity antigens in the endoplasmic reticulum. Phosphorylated. In terms of tissue distribution, in caput epididymal spermatozoa, detected in the head, mid and principal pieces. In cauda epididymal spermatozoa detected only in the acrosome (at protein level).

The protein localises to the endoplasmic reticulum. It localises to the endoplasmic reticulum lumen. The protein resides in the melanosome. It carries out the reaction Catalyzes the rearrangement of -S-S- bonds in proteins.. With respect to regulation, seems to be inhibited by acidic phospholipids. In terms of biological role, protein disulfide isomerase that catalyzes the formation, isomerization, and reduction or oxidation of disulfide bonds in client proteins and functions as a protein folding chaperone. Core component of the major histocompatibility complex class I (MHC I) peptide loading complex where it functions as an essential folding chaperone for TAPBP. Through TAPBP, assists the dynamic assembly of the MHC I complex with high affinity antigens in the endoplasmic reticulum. Therefore, plays a crucial role in the presentation of antigens to cytotoxic T cells in adaptive immunity. This Rattus norvegicus (Rat) protein is Protein disulfide-isomerase A3 (Pdia3).